The sequence spans 538 residues: Eukaryotic translation initiation factor 3 subunit L (538 aa).

The 209-residue stretch at 305 to 513 (TFSDILLYIQ…IHIADTKVSH (209 aa)) folds into the PCI domain.

Belongs to the eIF-3 subunit L family. In terms of assembly, component of the eukaryotic translation initiation factor 3 (eIF-3) complex. The eIF-3 complex interacts with pix.

It is found in the cytoplasm. Functionally, component of the eukaryotic translation initiation factor 3 (eIF-3) complex, which is involved in protein synthesis of a specialized repertoire of mRNAs and, together with other initiation factors, stimulates binding of mRNA and methionyl-tRNAi to the 40S ribosome. The eIF-3 complex specifically targets and initiates translation of a subset of mRNAs involved in cell proliferation. This chain is Eukaryotic translation initiation factor 3 subunit L, found in Drosophila mojavensis (Fruit fly).